The following is a 185-amino-acid chain: MIQYRGGYIASCYAQALFSVSSNVNSICKNAEFVVSVLENCNDISLFLSNPRVSREDKVKLVEVIGDYIDSILVKFIMVVIENNRGNILLQILNTFLDLVKKHNREVSISVTSCAVLTKQEEEGICDALFEKYGKVVSITNNIDPSILGGFIIRVNFDVIDVSLNSYLQSLRELSKMAIRSSISE.

Belongs to the ATPase delta chain family. As to quaternary structure, F-type ATPases have 2 components, F(1) - the catalytic core - and F(0) - the membrane proton channel. F(1) has five subunits: alpha(3), beta(3), gamma(1), delta(1), epsilon(1). F(0) has three main subunits: a(1), b(2) and c(10-14). The alpha and beta chains form an alternating ring which encloses part of the gamma chain. F(1) is attached to F(0) by a central stalk formed by the gamma and epsilon chains, while a peripheral stalk is formed by the delta and b chains.

It localises to the cell inner membrane. Its function is as follows. F(1)F(0) ATP synthase produces ATP from ADP in the presence of a proton or sodium gradient. F-type ATPases consist of two structural domains, F(1) containing the extramembraneous catalytic core and F(0) containing the membrane proton channel, linked together by a central stalk and a peripheral stalk. During catalysis, ATP synthesis in the catalytic domain of F(1) is coupled via a rotary mechanism of the central stalk subunits to proton translocation. In terms of biological role, this protein is part of the stalk that links CF(0) to CF(1). It either transmits conformational changes from CF(0) to CF(1) or is implicated in proton conduction. This is ATP synthase subunit delta from Ehrlichia chaffeensis (strain ATCC CRL-10679 / Arkansas).